A 78-amino-acid polypeptide reads, in one-letter code: Conotoxin Cl11.1 (78 aa).

The N-terminal stretch at Met1–Gly19 is a signal peptide. Positions Gly20–Ala33 are excised as a propeptide. 4 cysteine pairs are disulfide-bonded: Cys47/Cys61, Cys54/Cys66, Cys60/Cys70, and Cys65/Cys77.

Belongs to the conotoxin I1 superfamily. In terms of tissue distribution, expressed by the venom duct.

It is found in the secreted. In Californiconus californicus (California cone), this protein is Conotoxin Cl11.1.